Here is a 172-residue protein sequence, read N- to C-terminus: MAFRASGPAYQPLAPAASPARARVPAVAWIGVGAIVGAFALVAALVLVPPRSSWGLSPCDSGWQEFNAGCVAWDPTPVEHEQAVGGCSAPATLIPRAAAKHLAALTRVQAERSSGYWWVNGDGIRTCLRLVDSVSGIDEFCEELAIRICYYPRSPGGFVRFVTSIRNALGLP.

The Intravirion segment spans residues 1-27 (MAFRASGPAYQPLAPAASPARARVPAV). The helical; Signal-anchor for type II membrane protein transmembrane segment at 28–48 (AWIGVGAIVGAFALVAALVLV) threads the bilayer. Topologically, residues 49 to 172 (PPRSSWGLSP…TSIRNALGLP (124 aa)) are virion surface.

The protein belongs to the herpesviridae HHV-1 UL45 family.

Its subcellular location is the virion membrane. In terms of biological role, important virulence factor of HSV neurotropism. Seems to be required for glycoprotein B-induced fusion. Dispensable for growth in vitro. The polypeptide is Envelope protein UL45 (Homo sapiens (Human)).